Reading from the N-terminus, the 325-residue chain is UPF0285 protein MA_3856 (325 aa).

The protein belongs to the UPF0285 family.

The protein is UPF0285 protein MA_3856 of Methanosarcina acetivorans (strain ATCC 35395 / DSM 2834 / JCM 12185 / C2A).